A 144-amino-acid polypeptide reads, in one-letter code: Sentan (144 aa).

Residues 1-31 are disordered; sequence MCGCRASVPSTKHYSVNPAPTTRSPPAAAGM. Residues 18 to 29 are compositionally biased toward low complexity; that stretch reads PAPTTRSPPAAA.

This sequence belongs to the S-100 family.

It is found in the cell projection. The protein localises to the cilium. Its function is as follows. May be a component of the linker structure that bridges the ciliary membrane and peripheral singlet microtubules. This chain is Sentan, found in Gallus gallus (Chicken).